Here is a 348-residue protein sequence, read N- to C-terminus: Macrophage-capping protein (348 aa).

Met1 is modified (N-acetylmethionine). A Gelsolin-like 1 repeat occupies 27 to 75 (EKLKPVPVAQENQGVFFSGDSYLVLHNGPEEVSHLHLWIGQQSSRDEQG). The Nuclear localization signal signature appears at 137 to 146 (KKLYQVKGKK). Gelsolin-like repeat units lie at residues 148 to 188 (IRAT…LERN) and 261 to 307 (MNLT…KERQ). Ser337 is modified (phosphoserine).

The protein belongs to the villin/gelsolin family. As to quaternary structure, interacts with NUP62. Interacts with NUTF2 and RAN; involved in CAPG nuclear import. In terms of processing, the N-terminus is blocked. In terms of tissue distribution, macrophages and macrophage-like cells.

It localises to the nucleus. Its subcellular location is the cytoplasm. The protein localises to the melanosome. It is found in the cell projection. The protein resides in the lamellipodium. It localises to the ruffle. Its function is as follows. Calcium-sensitive protein which reversibly blocks the barbed ends of actin filaments but does not sever preformed actin filaments. May play an important role in macrophage function. May play a role in regulating cytoplasmic and/or nuclear structures through potential interactions with actin. May bind DNA. The sequence is that of Macrophage-capping protein (CAPG) from Homo sapiens (Human).